Here is a 322-residue protein sequence, read N- to C-terminus: Triosephosphate isomerase, chloroplastic (322 aa).

A chloroplast-targeting transit peptide spans 1–67 (MAVVSTSLAS…RRCPRGVVAM (67 aa)). Substrate contacts are provided by asparagine 78 and lysine 80. Histidine 162 functions as the Electrophile in the catalytic mechanism. Catalysis depends on glutamate 232, which acts as the Proton acceptor.

Belongs to the triosephosphate isomerase family. Homodimer.

The protein localises to the plastid. Its subcellular location is the chloroplast. The enzyme catalyses D-glyceraldehyde 3-phosphate = dihydroxyacetone phosphate. Its pathway is carbohydrate biosynthesis; Calvin cycle. The chain is Triosephosphate isomerase, chloroplastic (TPIP1) from Spinacia oleracea (Spinach).